A 241-amino-acid polypeptide reads, in one-letter code: Spheroidene monooxygenase (241 aa).

Belongs to the CrtA family. The cofactor is heme.

The catalysed reaction is spheroidene + 4 reduced [2Fe-2S]-[ferredoxin] + 2 O2 + 4 H(+) = spheroiden-2-one + 4 oxidized [2Fe-2S]-[ferredoxin] + 3 H2O. It catalyses the reaction spirilloxanthin + 4 reduced [2Fe-2S]-[ferredoxin] + 2 O2 + 4 H(+) = 2-oxospirilloxanthin + 4 oxidized [2Fe-2S]-[ferredoxin] + 3 H2O. The enzyme catalyses 2-oxospirilloxanthin + 4 reduced [2Fe-2S]-[ferredoxin] + 2 O2 + 4 H(+) = 2,2'-dioxospirilloxanthin + 4 oxidized [2Fe-2S]-[ferredoxin] + 3 H2O. It carries out the reaction spheroidene + 2 reduced [2Fe-2S]-[ferredoxin] + O2 + 2 H(+) = 2-hydroxyspheroidene + 2 oxidized [2Fe-2S]-[ferredoxin] + H2O. The catalysed reaction is 2-hydroxyspheroidene + 2 reduced [2Fe-2S]-[ferredoxin] + O2 + 2 H(+) = 2,2-dihydroxyspheroidene + 2 oxidized [2Fe-2S]-[ferredoxin] + H2O. It catalyses the reaction 2,2-dihydroxyspheroidene = spheroiden-2-one + H2O. The enzyme catalyses spirilloxanthin + 2 reduced [2Fe-2S]-[ferredoxin] + O2 + 2 H(+) = 2-hydroxyspirilloxanthin + 2 oxidized [2Fe-2S]-[ferredoxin] + H2O. It carries out the reaction 2-hydroxyspirilloxanthin + 2 reduced [2Fe-2S]-[ferredoxin] + O2 + 2 H(+) = 2,2-dihydroxyspirilloxanthin + 2 oxidized [2Fe-2S]-[ferredoxin] + H2O. The catalysed reaction is 2,2-dihydroxyspirilloxanthin = 2-oxospirilloxanthin + H2O. It catalyses the reaction 2-oxospirilloxanthin + 2 reduced [2Fe-2S]-[ferredoxin] + O2 + 2 H(+) = 2'-hydroxy-2-oxospirilloxanthin + 2 oxidized [2Fe-2S]-[ferredoxin] + H2O. The enzyme catalyses 2'-hydroxy-2-oxospirilloxanthin + 2 reduced [2Fe-2S]-[ferredoxin] + O2 + 2 H(+) = 2',2'-dihydroxy-2-oxospirilloxanthin + 2 oxidized [2Fe-2S]-[ferredoxin] + H2O. It carries out the reaction 2',2'-dihydroxy-2-oxospirilloxanthin = 2,2'-dioxospirilloxanthin + H2O. It participates in carotenoid biosynthesis; spheroidene biosynthesis. Its function is as follows. Involved in the biosynthesis of the carotenoid spheroidene. Catalyzes the introduction of one keto group at the C-2 position of spheroidene. In vitro, can also catalyze the introduction of two keto groups at the C-2 and C-2' positions of spirilloxanthin, but spirilloxanthin biosynthesis pathway is not present in R.capsulatus. This chain is Spheroidene monooxygenase, found in Rhodobacter capsulatus (strain ATCC BAA-309 / NBRC 16581 / SB1003).